Reading from the N-terminus, the 500-residue chain is Maturase K (500 aa).

Belongs to the intron maturase 2 family. MatK subfamily.

The protein localises to the plastid. It localises to the chloroplast. In terms of biological role, usually encoded in the trnK tRNA gene intron. Probably assists in splicing its own and other chloroplast group II introns. This is Maturase K from Brasenia schreberi (Water shield).